The sequence spans 50 residues: Photosystem II reaction center protein M (50 aa).

A helical membrane pass occupies residues 7-27 (GFIASLLFVGVPTIFLIGLFI).

Belongs to the PsbM family. In terms of assembly, PSII is composed of 1 copy each of membrane proteins PsbA, PsbB, PsbC, PsbD, PsbE, PsbF, PsbH, PsbI, PsbJ, PsbK, PsbL, PsbM, PsbT, PsbX, PsbY, Psb30/Ycf12, peripheral proteins PsbO, CyanoQ (PsbQ), PsbU, PsbV and a large number of cofactors. It forms dimeric complexes.

The protein resides in the cellular thylakoid membrane. Its function is as follows. One of the components of the core complex of photosystem II (PSII). PSII is a light-driven water:plastoquinone oxidoreductase that uses light energy to abstract electrons from H(2)O, generating O(2) and a proton gradient subsequently used for ATP formation. It consists of a core antenna complex that captures photons, and an electron transfer chain that converts photonic excitation into a charge separation. This subunit is found at the monomer-monomer interface. This chain is Photosystem II reaction center protein M, found in Prochlorococcus marinus (strain MIT 9312).